Consider the following 520-residue polypeptide: GMP synthase [glutamine-hydrolyzing] (520 aa).

A Glutamine amidotransferase type-1 domain is found at 9 to 202 (TILIIDFGSQ…VHRIVGVKPG (194 aa)). Catalysis depends on Cys86, which acts as the Nucleophile. Active-site residues include His176 and Glu178. The 193-residue stretch at 203-395 (WTMGAYREQA…LGLPDSFIGR (193 aa)) folds into the GMPS ATP-PPase domain. 230 to 236 (SGGVDSS) is an ATP binding site.

As to quaternary structure, homodimer.

The catalysed reaction is XMP + L-glutamine + ATP + H2O = GMP + L-glutamate + AMP + diphosphate + 2 H(+). Its pathway is purine metabolism; GMP biosynthesis; GMP from XMP (L-Gln route): step 1/1. Functionally, catalyzes the synthesis of GMP from XMP. The sequence is that of GMP synthase [glutamine-hydrolyzing] from Brucella canis (strain ATCC 23365 / NCTC 10854 / RM-666).